Consider the following 251-residue polypeptide: Electron transfer flavoprotein subunit beta, mitochondrial (251 aa).

The protein belongs to the ETF beta-subunit/FixA family. In terms of assembly, heterodimer of an alpha and a beta subunit. Requires FAD as cofactor. It depends on AMP as a cofactor.

The protein resides in the mitochondrion matrix. Functionally, the electron transfer flavoprotein serves as a specific electron acceptor for several dehydrogenases, including five acyl-CoA dehydrogenases, glutaryl-CoA and sarcosine dehydrogenase. It transfers the electrons to the main mitochondrial respiratory chain via ETF-ubiquinone oxidoreductase (ETF dehydrogenase). Involved in leucine catabolism and in phytol degradation. The sequence is that of Electron transfer flavoprotein subunit beta, mitochondrial (ETFB) from Arabidopsis thaliana (Mouse-ear cress).